Consider the following 321-residue polypeptide: Lambda-crystallin homolog (321 aa).

At Ser-6 the chain carries Phosphoserine. NAD(+)-binding positions include 19 to 20 (LI), Asp-39, Glu-100, and Lys-105.

Belongs to the 3-hydroxyacyl-CoA dehydrogenase family. As to quaternary structure, homodimer.

It localises to the cytoplasm. It carries out the reaction L-gulonate + NAD(+) = 3-dehydro-L-gulonate + NADH + H(+). With respect to regulation, inhibited by malonate. In terms of biological role, has high L-gulonate 3-dehydrogenase activity. It also exhibits low dehydrogenase activity toward L-3-hydroxybutyrate (HBA) and L-threonate. This chain is Lambda-crystallin homolog (CRYL1), found in Bos taurus (Bovine).